Reading from the N-terminus, the 285-residue chain is MLYLTKISNAGSEFTENEQKIADFLQANVSELQSVSSRQMAKQLGISQSSIVKFAQKLGAQGFTELRMALIGEYSASREKTNTTALHLHSSITSDDSLEVIARKLNREKELALEQTCALFDYARLQKIIEVISKAPFIQITGLGGSALVGRDLSFKLMKIGYRVACEADTHVQATVSQALKKGDVQIAISYSGSKKEIVLCAEAARKQGATVIAITSLADSPLRRLAHFTLDTVSGETEWRSSSMSTRTAQNSVTDLLFVGLVQLNDVASLKMIQRSSELTQRLK.

Positions 1–77 constitute an HTH rpiR-type domain; sequence MLYLTKISNA…MALIGEYSAS (77 aa). Residues 37 to 56 constitute a DNA-binding region (H-T-H motif); that stretch reads SRQMAKQLGISQSSIVKFAQ. Residues 128–279 form the SIS domain; that stretch reads IIEVISKAPF…SLKMIQRSSE (152 aa).

As to quaternary structure, homotetramer.

The protein operates within amino-sugar metabolism; N-acetylmuramate degradation [regulation]. Represses the expression of the murPQ operon involved in the uptake and degradation of N-acetylmuramic acid (MurNAc). Binds to two adjacent inverted repeats within the operator region. MurNAc 6-phosphate, the substrate of MurQ, is the specific inducer that weakens binding of MurR to the operator. The sequence is that of HTH-type transcriptional regulator MurR from Shigella boydii serotype 18 (strain CDC 3083-94 / BS512).